We begin with the raw amino-acid sequence, 595 residues long: Leiomodin-1 (595 aa).

3 disordered regions span residues 1–69, 81–322, and 467–568; these read MSKV…EAML, QREM…KVKN, and DKQR…QEKN. Ser12 carries the phosphoserine modification. The span at 27–40 shows a compositional bias: acidic residues; the sequence is EEMEELEKELDVVD. Composition is skewed to basic and acidic residues over residues 81 to 110, 117 to 127, 134 to 192, 200 to 223, 230 to 249, 257 to 287, 467 to 476, and 484 to 493; these read QREM…DASR, QDSDLGKEPKK, FSRD…EKTG, SRDK…KLTA, GRRE…KPED, RDWR…KAPE, DKQRQKRLQE, and SGEKKDRLEV. Ser85 bears the Phosphoserine mark. Ser135 carries the post-translational modification Phosphoserine. 8 tandem repeats follow at residues 165–179, 180–195, 196–211, 212–226, 227–240, 242–255, 256–271, and 272–288. Residues 165–288 form an 8 X approximate tandem repeats region; sequence AAVDRKESGK…EESKTKAPEK (124 aa). The 5 X 4 AA approximate tandem repeats stretch occupies residues 503–522; that stretch reads SPKPSPQPSPKPAPKNSPKK. Composition is skewed to pro residues over residues 505 to 517 and 527 to 538; these read KPSP…PAPK and AAPPPPPPPLAP. Position 550 is a phosphoserine (Ser550). A WH2 domain is found at 569-588; it reads SRDQLLAAIRSSNLKQLKKV.

This sequence belongs to the tropomodulin family. In terms of tissue distribution, detected in aorta, urinary bladder and uterus (at protein level). Detected in smooth muscle cells. Detected in aorta, bladder, colon, intestine, stomach and uterus.

It is found in the cytoplasm. The protein localises to the myofibril. Its subcellular location is the sarcomere. The protein resides in the cytoskeleton. Required for proper contractility of visceral smooth muscle cells. Mediates nucleation of actin filaments. The protein is Leiomodin-1 (Lmod1) of Mus musculus (Mouse).